The chain runs to 539 residues: Putative cysteine ligase BshC (539 aa).

The stretch at 455 to 475 (LQKNAAFIQDQLLFLERTVTK) forms a coiled coil.

It belongs to the BshC family.

Its function is as follows. Involved in bacillithiol (BSH) biosynthesis. May catalyze the last step of the pathway, the addition of cysteine to glucosamine malate (GlcN-Mal) to generate BSH. In Bacillus velezensis (strain DSM 23117 / BGSC 10A6 / LMG 26770 / FZB42) (Bacillus amyloliquefaciens subsp. plantarum), this protein is Putative cysteine ligase BshC.